A 426-amino-acid polypeptide reads, in one-letter code: Enolase (426 aa).

Gln-165 is a (2R)-2-phosphoglycerate binding site. Glu-207 acts as the Proton donor in catalysis. Mg(2+)-binding residues include Asp-244, Glu-285, and Asp-312. Positions 337, 366, 367, and 388 each coordinate (2R)-2-phosphoglycerate. The active-site Proton acceptor is the Lys-337.

It belongs to the enolase family. Mg(2+) is required as a cofactor.

It is found in the cytoplasm. It localises to the secreted. The protein resides in the cell surface. It catalyses the reaction (2R)-2-phosphoglycerate = phosphoenolpyruvate + H2O. It participates in carbohydrate degradation; glycolysis; pyruvate from D-glyceraldehyde 3-phosphate: step 4/5. Its function is as follows. Catalyzes the reversible conversion of 2-phosphoglycerate (2-PG) into phosphoenolpyruvate (PEP). It is essential for the degradation of carbohydrates via glycolysis. This Thermosynechococcus vestitus (strain NIES-2133 / IAM M-273 / BP-1) protein is Enolase.